Reading from the N-terminus, the 534-residue chain is MAKELTFEQQARAKLLEGINKLAKAVKITAGPKGRNALIEKKYGAPLIVNDGVTIAREIELKDPVENMGAKLIAEAAISTNDIAGDGTTTATILTHEIVNKAIEAINNGTNPVNLRIGIENAAKLVSEYLTSVSKPIKSIDEITQVGAISSGSKFIGELIAKAMDIVGPSGVISIDDAKSFDTTLDTTDGLEFKGGYSSPYMVTDSEKMLSELANPKILVSLNKINTVKEILPLLEASVESSAPLLIVASDIAEDVVTALAINKLRGTLNVVSVKCAEFGEAQKNTLEDLAISVNTILVDSAAGIEFKDLELNKLGSAEKVIISKDKTTVINGACHKDVLAKYLNNLKAKSANLTSKYDKERITKRIANLSNGVAVIHVGGATEVAQKELKLRIEDALNSTKAAVEEGIVAGGGIALMNAIEVLKQVKESNPEIALGYEIVRSSLTAPARQIIENAGQNSSKIINNIINSKQLGYGYNAETNEFVNMINNGIIDPTKVTKTALEKACSVAALLITTEVAINDELKEEKPSLNHL.

Residues 29–32, 86–90, G413, and D494 contribute to the ATP site; these read TAGP and DGTTT.

The protein belongs to the chaperonin (HSP60) family. As to quaternary structure, forms a cylinder of 14 subunits composed of two heptameric rings stacked back-to-back. Interacts with the co-chaperonin GroES.

The protein resides in the cytoplasm. The catalysed reaction is ATP + H2O + a folded polypeptide = ADP + phosphate + an unfolded polypeptide.. Its function is as follows. Together with its co-chaperonin GroES, plays an essential role in assisting protein folding. The GroEL-GroES system forms a nano-cage that allows encapsulation of the non-native substrate proteins and provides a physical environment optimized to promote and accelerate protein folding. The polypeptide is Chaperonin GroEL (Mycoplasmoides gallisepticum (strain R(low / passage 15 / clone 2)) (Mycoplasma gallisepticum)).